A 638-amino-acid polypeptide reads, in one-letter code: Growth hormone receptor (638 aa).

A signal peptide spans 1 to 18 (MDLWQLLLTLALAGSSDA). The Extracellular portion of the chain corresponds to 19-264 (FSGSEPTAAI…NQFTCEEDFY (246 aa)). Asn-46 is a glycosylation site (N-linked (GlcNAc...) asparagine). 2 disulfide bridges follow: Cys-56/Cys-66 and Cys-101/Cys-112. Asn-115 carries an N-linked (GlcNAc...) asparagine glycan. Cys-126 and Cys-140 are joined by a disulfide. The region spanning 151 to 254 (PPIALNWTLL…EVLYVTLPQM (104 aa)) is the Fibronectin type-III domain. 3 N-linked (GlcNAc...) asparagine glycosylation sites follow: Asn-156, Asn-161, and Asn-200. The WSXWS motif signature appears at 240–244 (YGEFS). The chain crosses the membrane as a helical span at residues 265–288 (FPWLLIIIFGIFGLTVMLFVFLFS). Residues 289 to 638 (KQQRIKMLIL…STDQLNKIMP (350 aa)) are Cytoplasmic-facing. The interval 294-379 (KMLILPPVPV…HQKSHSNLGV (86 aa)) is required for JAK2 binding. The Box 1 motif signature appears at 297-305 (ILPPVPVPK). The short motif at 340 to 349 (DSWVEFIELD) is the UbE motif element. Position 341 is a phosphoserine (Ser-341). The segment at 353 to 388 (PDEKNEGSDTDRLLSSDHQKSHSNLGVKDGDSGRTS) is disordered. Residues 356–372 (KNEGSDTDRLLSSDHQK) show a composition bias toward basic and acidic residues. Phosphotyrosine occurs at positions 487 and 595.

This sequence belongs to the type I cytokine receptor family. Type 1 subfamily. As to quaternary structure, on growth hormone (GH) binding, forms homodimers and binds JAK2 via a box 1-containing domain. The soluble form (GHBP) is produced by phorbol ester-promoted proteolytic cleavage at the cell surface (shedding) by ADAM17/TACE. Shedding is inhibited by growth hormone (GH) binding to the receptor probably due to a conformational change in GHR rendering the receptor inaccessible to ADAM17. In terms of processing, on GH binding, phosphorylated on tyrosine residues in the cytoplasmic domain by JAK2. Post-translationally, ubiquitinated by the ECS(SOCS2) complex following ligand-binding and phosphorylation by JAK2, leading to its degradation by the proteasome. Regulation by the ECS(SOCS2) complex acts as a negative feedback loop of growth hormone receptor signaling. Ubiquitination is not sufficient for GHR internalization.

It localises to the cell membrane. The protein resides in the secreted. Receptor for pituitary gland growth hormone (GH1) involved in regulating postnatal body growth. On ligand binding, couples to the JAK2/STAT5 pathway. In terms of biological role, the soluble form (GHBP) acts as a reservoir of growth hormone in plasma and may be a modulator/inhibitor of GH signaling. The polypeptide is Growth hormone receptor (GHR) (Macaca mulatta (Rhesus macaque)).